The chain runs to 202 residues: MPEETQVHVVRHGEVHNPTGILYGRLPGFHLSATGAAQAAAVADALADRDIVAVIASPLQRAQETAAPIAARHDLAVETDPDLIESANFFEGRRVGPGDGAWRDPRVWWQLRNPFTPSWGEPYVDIAARMTTAVDKARVRGAGHEVVCVSHQLPVWTLRLYLTGKRLWHDPRRRDCALASVTSLIYDGDRLVDVVYSQPAAL.

Lysine 136 participates in a covalent cross-link: Isoglutamyl lysine isopeptide (Lys-Gln) (interchain with Q-Cter in protein Pup).

This is an uncharacterized protein from Mycobacterium tuberculosis (strain ATCC 25618 / H37Rv).